The following is a 329-amino-acid chain: Pantothenate kinase (329 aa).

Position 107–114 (107–114 (GSVAVGKS)) interacts with ATP.

Belongs to the prokaryotic pantothenate kinase family.

It localises to the cytoplasm. It catalyses the reaction (R)-pantothenate + ATP = (R)-4'-phosphopantothenate + ADP + H(+). Its pathway is cofactor biosynthesis; coenzyme A biosynthesis; CoA from (R)-pantothenate: step 1/5. This chain is Pantothenate kinase, found in Streptomyces avermitilis (strain ATCC 31267 / DSM 46492 / JCM 5070 / NBRC 14893 / NCIMB 12804 / NRRL 8165 / MA-4680).